Here is a 264-residue protein sequence, read N- to C-terminus: MRQYLDLLAHVLENGIDREDRTGTGTRGVFGYQMRFDLSDGFPVLTTKKLHLRSIIYELLWFLKGDTNIRYLQENGVTIWDEWADENGDLGPVYGAQWRSWPAPDGRHIDQIANLLNGLRENPYSRRHIVTAWNPAEIDGMALPPCHCLFQFHVAEGRLSCQLYQRSADIFLGVPFNIASYALLTMMIAQVTGLKPGDFVHTLGDAHLYKNHFDQAREQLTRTPKPLPTMWINPEVDDLFAFGYEDFRLEGYVADPTIRAPIAV.

Residue arginine 21 participates in dUMP binding. Histidine 51 serves as a coordination point for (6R)-5,10-methylene-5,6,7,8-tetrahydrofolate. Residue 126–127 (RR) coordinates dUMP. Cysteine 146 acts as the Nucleophile in catalysis. DUMP contacts are provided by residues 166 to 169 (RSAD), asparagine 177, and 207 to 209 (HLY). Residue aspartate 169 participates in (6R)-5,10-methylene-5,6,7,8-tetrahydrofolate binding. Residue alanine 263 coordinates (6R)-5,10-methylene-5,6,7,8-tetrahydrofolate.

This sequence belongs to the thymidylate synthase family. Bacterial-type ThyA subfamily. As to quaternary structure, homodimer.

The protein resides in the cytoplasm. It carries out the reaction dUMP + (6R)-5,10-methylene-5,6,7,8-tetrahydrofolate = 7,8-dihydrofolate + dTMP. It participates in pyrimidine metabolism; dTTP biosynthesis. Catalyzes the reductive methylation of 2'-deoxyuridine-5'-monophosphate (dUMP) to 2'-deoxythymidine-5'-monophosphate (dTMP) while utilizing 5,10-methylenetetrahydrofolate (mTHF) as the methyl donor and reductant in the reaction, yielding dihydrofolate (DHF) as a by-product. This enzymatic reaction provides an intracellular de novo source of dTMP, an essential precursor for DNA biosynthesis. The sequence is that of Thymidylate synthase from Chelativorans sp. (strain BNC1).